A 250-amino-acid chain; its full sequence is Manganese transport system ATP-binding protein MntB (250 aa).

Positions 5–236 (VKVDNLSVFY…MVAKTYQGNL (232 aa)) constitute an ABC transporter domain. 37–44 (GPNGAGKS) lines the ATP pocket.

The protein belongs to the ABC transporter superfamily.

It localises to the cell membrane. This protein is probably a component of a manganese permease, a binding protein-dependent, ATP-driven transport system. Probably responsible for energy coupling to the transport system. The protein is Manganese transport system ATP-binding protein MntB (mntB) of Halalkalibacterium halodurans (strain ATCC BAA-125 / DSM 18197 / FERM 7344 / JCM 9153 / C-125) (Bacillus halodurans).